A 689-amino-acid polypeptide reads, in one-letter code: Beta-adrenergic receptor kinase 1 (689 aa).

The tract at residues 1–190 (MADLEAVLAD…ELNIHLTMND (190 aa)) is N-terminal. Positions 54-175 (TFEKIFSQKL…IESDKFTRFC (122 aa)) constitute an RGS domain. A Protein kinase domain is found at 191-453 (FSVHRIIGRG…AQEVKESPFF (263 aa)). Residues 197-205 (IGRGGFGEV) and Lys220 contribute to the ATP site. Asp317 serves as the catalytic Proton acceptor. Positions 454 to 521 (RSLDWQMVFL…TISERWQQEV (68 aa)) constitute an AGC-kinase C-terminal domain. The PH domain occupies 558-652 (DCIMHGYMSK…WKKELRDAYR (95 aa)). Ser670 is subject to Phosphoserine.

The protein belongs to the protein kinase superfamily. AGC Ser/Thr protein kinase family. GPRK subfamily. Interacts with the heterodimer formed by GNB1 and GNG2. Interacts with GIT1. Interacts with, and phosphorylates chemokine-stimulated CCR5. Interacts with ARRB1. Interacts with LPAR1 and LPAR2. Interacts with RALA in response to LPAR1 activation. ADRBK1 and RALA mutually inhibit each other's binding to LPAR1. Interacts with ADRB2. Expressed in peripheral blood leukocytes.

It is found in the cytoplasm. Its subcellular location is the cell membrane. The protein resides in the postsynapse. It localises to the presynapse. The enzyme catalyses [beta-adrenergic receptor] + ATP = [beta-adrenergic receptor]-phosphate + ADP + H(+). Its activity is regulated as follows. In contrast to other AGC family kinases, the catalytic activity is solely regulated by the binding of substrates and ligands, not by phosphorylation of the kinase domain. In terms of biological role, specifically phosphorylates the agonist-occupied form of the beta-adrenergic and closely related receptors, probably inducing a desensitization of them. Key regulator of LPAR1 signaling. Competes with RALA for binding to LPAR1 thus affecting the signaling properties of the receptor. Desensitizes LPAR1 and LPAR2 in a phosphorylation-independent manner. Positively regulates ciliary smoothened (SMO)-dependent Hedgehog (Hh) signaling pathway by facilitating the trafficking of SMO into the cilium and the stimulation of SMO activity. Inhibits relaxation of airway smooth muscle in response to blue light. The protein is Beta-adrenergic receptor kinase 1 of Homo sapiens (Human).